A 156-amino-acid polypeptide reads, in one-letter code: Small ribosomal subunit protein uS7 (156 aa).

This sequence belongs to the universal ribosomal protein uS7 family. As to quaternary structure, part of the 30S ribosomal subunit. Contacts proteins S9 and S11.

Functionally, one of the primary rRNA binding proteins, it binds directly to 16S rRNA where it nucleates assembly of the head domain of the 30S subunit. Is located at the subunit interface close to the decoding center, probably blocks exit of the E-site tRNA. In Staphylococcus aureus (strain USA300), this protein is Small ribosomal subunit protein uS7.